A 398-amino-acid polypeptide reads, in one-letter code: Large ribosomal subunit protein uL3 (398 aa).

Positions 1–10 (MSHRKFEAPR) are enriched in basic and acidic residues. Residues 1–34 (MSHRKFEAPRHGNLGFRPRKRAARHQGKVKSFPK) are disordered. Positions 17–28 (RPRKRAARHQGK) are enriched in basic residues.

It belongs to the universal ribosomal protein uL3 family.

The protein resides in the cytoplasm. Its function is as follows. The L3 protein is a component of the large subunit of cytoplasmic ribosomes. The polypeptide is Large ribosomal subunit protein uL3 (rpl3) (Dictyostelium discoideum (Social amoeba)).